The sequence spans 327 residues: Pumilio homolog 18 (327 aa).

In terms of domain architecture, PUM-HD spans 1–324 (MAVADNPFSM…NIANILDSFR (324 aa)). Pumilio repeat units lie at residues 79-114 (SDSD…FCAA), 115-149 (ILRR…ALYE), 150-185 (RILY…DQLL), 186-222 (ELVA…NIAV), 223-260 (NLYG…ELLG), and 261-295 (CDGD…DLFW).

The protein localises to the cytoplasm. Its function is as follows. Sequence-specific RNA-binding protein that regulates translation and mRNA stability by binding the 3'-UTR of target mRNAs. This chain is Pumilio homolog 18 (APUM18), found in Arabidopsis thaliana (Mouse-ear cress).